Consider the following 26-residue polypeptide: Acyl carrier protein (26 aa).

In terms of domain architecture, Carrier spans 2–26; the sequence is SDTATRVQKIVVEHLGVESDKVTQE.

Belongs to the acyl carrier protein (ACP) family. Post-translationally, 4'-phosphopantetheine is transferred from CoA to a specific serine of apo-ACP by AcpS. This modification is essential for activity because fatty acids are bound in thioester linkage to the sulfhydryl of the prosthetic group.

The protein resides in the cytoplasm. The protein operates within lipid metabolism; fatty acid biosynthesis. Its function is as follows. Carrier of the growing fatty acid chain in fatty acid biosynthesis. The chain is Acyl carrier protein (acpP) from Erythrobacter longus.